We begin with the raw amino-acid sequence, 134 residues long: FK506-binding protein 2 (134 aa).

Positions 1 to 19 (MRILLLSALFLSLTTLVLS) are cleaved as a signal peptide. The PPIase FKBP-type domain occupies 39-127 (GDTVHMHYRG…IFETELVQIE (89 aa)). The Prevents secretion from ER motif lies at 131 to 134 (NDEL).

This sequence belongs to the FKBP-type PPIase family. FKBP2 subfamily.

It is found in the endoplasmic reticulum. The catalysed reaction is [protein]-peptidylproline (omega=180) = [protein]-peptidylproline (omega=0). With respect to regulation, inhibited by both FK506 and rapamycin. In terms of biological role, PPIases accelerate the folding of proteins. It catalyzes the cis-trans isomerization of proline imidic peptide bonds in oligopeptides. In Aspergillus fumigatus (strain ATCC MYA-4609 / CBS 101355 / FGSC A1100 / Af293) (Neosartorya fumigata), this protein is FK506-binding protein 2 (fpr2).